Consider the following 473-residue polypeptide: Probable transporter MCH2 (473 aa).

Over 1–37 (MSEERHEDHHRDVENKLNLNGKDDINGNTSISIEVPD) the chain is Cytoplasmic. The chain crosses the membrane as a helical span at residues 38 to 58 (GGYGWFILLAFILYNFSTWGA). Over 59-83 (NSGYAIYLAHYLENNTFAGGSKLDY) the chain is Extracellular. N-linked (GlcNAc...) asparagine glycosylation occurs at N72. A helical membrane pass occupies residues 84-105 (ASIGGLAFSCGLFFAPVITWLY). The Cytoplasmic segment spans residues 106–111 (HIFSIQ). Residues 112 to 135 (FIIGLGILFQGAALLLAAFSVTLW) traverse the membrane as a helical segment. Topologically, residues 136-141 (EIYLTQ) are extracellular. A helical membrane pass occupies residues 142 to 163 (GVLIGFGLAFIFIPSVTLIPLW). Over 164-169 (FRNKRS) the chain is Cytoplasmic. Residues 170 to 186 (LASGIGTAGSGLGGIVF) form a helical membrane-spanning segment. Residues 187–200 (NLGMQSILQKRGVK) are Extracellular-facing. A helical transmembrane segment spans residues 201 to 220 (WALIAQCIICTSLSTIALML). Residues 221–243 (TRTTHQGLRQHKRSYKFELLDYD) lie on the Cytoplasmic side of the membrane. Residues 244 to 268 (VLSNFAVWLLFGFVSFAMLGYVVLL) traverse the membrane as a helical segment. Topologically, residues 269–286 (YSLSDFTVSLGYTSKQGS) are extracellular. Residues 287–304 (YVSCMVSVGSLLGRPIVG) form a helical membrane-spanning segment. The Cytoplasmic segment spans residues 305–312 (HIADKYGS). Residues 313-332 (LTVGMILHLVMAILCWAMWI) form a helical membrane-spanning segment. At 333–342 (PCKNLATAIA) the chain is on the extracellular side. The chain crosses the membrane as a helical span at residues 343 to 362 (FGLLVGSIMGTIWPTIASIV). At 363 to 370 (TRIVGLQK) the chain is on the cytoplasmic side. A helical transmembrane segment spans residues 371-394 (LPGTFGSTWIFMAAFALVAPIIGL). Over 395-408 (ELRSTDTNGNDYYR) the chain is Extracellular. The chain crosses the membrane as a helical span at residues 409–433 (TAIFVGFAYFGVSLCQWLLRGFIIA). At 434–473 (RDEIAVREAYSADQNELHLNVKLSHMSKCLFRYKQLPRRV) the chain is on the cytoplasmic side.

Belongs to the major facilitator superfamily. Monocarboxylate porter (TC 2.A.1.13) family.

Its subcellular location is the membrane. Its function is as follows. Probable transporter. Does not act in the transport of monocarboxylic acids across the plasma membrane. In Saccharomyces cerevisiae (strain ATCC 204508 / S288c) (Baker's yeast), this protein is Probable transporter MCH2 (MCH2).